We begin with the raw amino-acid sequence, 493 residues long: Cytoplasmic tRNA 2-thiolation protein 2 (493 aa).

At S489 the chain carries Phosphoserine.

The protein belongs to the CTU2/NCS2 family. As to quaternary structure, interacts with NCS6 and URM1. May act by forming a heterodimer with NCS6.

It localises to the cytoplasm. It functions in the pathway tRNA modification; 5-methoxycarbonylmethyl-2-thiouridine-tRNA biosynthesis. In terms of biological role, plays a central role in 2-thiolation of mcm(5)S(2)U at tRNA wobble positions of tRNA(Lys), tRNA(Glu) and tRNA(Gln). May act by forming a heterodimer with NCS6 that ligates sulfur from thiocarboxylated URM1 onto the uridine of tRNAs at wobble position. Prior mcm(5) tRNA modification by the elongator complex is required for 2-thiolation. May also be involved in protein urmylation. The chain is Cytoplasmic tRNA 2-thiolation protein 2 from Saccharomyces cerevisiae (strain AWRI1631) (Baker's yeast).